We begin with the raw amino-acid sequence, 380 residues long: DNA replication and repair protein RecF (380 aa).

30 to 37 (GNNAQGKS) serves as a coordination point for ATP.

It belongs to the RecF family.

It is found in the cytoplasm. Its function is as follows. The RecF protein is involved in DNA metabolism; it is required for DNA replication and normal SOS inducibility. RecF binds preferentially to single-stranded, linear DNA. It also seems to bind ATP. The sequence is that of DNA replication and repair protein RecF from Crocosphaera subtropica (strain ATCC 51142 / BH68) (Cyanothece sp. (strain ATCC 51142)).